Consider the following 468-residue polypeptide: ATP synthase subunit beta (468 aa).

Position 155–162 (155–162 (GGAGVGKT)) interacts with ATP.

The protein belongs to the ATPase alpha/beta chains family. As to quaternary structure, F-type ATPases have 2 components, CF(1) - the catalytic core - and CF(0) - the membrane proton channel. CF(1) has five subunits: alpha(3), beta(3), gamma(1), delta(1), epsilon(1). CF(0) has three main subunits: a(1), b(2) and c(9-12). The alpha and beta chains form an alternating ring which encloses part of the gamma chain. CF(1) is attached to CF(0) by a central stalk formed by the gamma and epsilon chains, while a peripheral stalk is formed by the delta and b chains.

Its subcellular location is the cell membrane. It catalyses the reaction ATP + H2O + 4 H(+)(in) = ADP + phosphate + 5 H(+)(out). Its function is as follows. Produces ATP from ADP in the presence of a proton gradient across the membrane. The catalytic sites are hosted primarily by the beta subunits. In Streptococcus uberis (strain ATCC BAA-854 / 0140J), this protein is ATP synthase subunit beta.